We begin with the raw amino-acid sequence, 537 residues long: O-phosphoserine--tRNA(Cys) ligase (537 aa).

Substrate-binding positions include 186 to 188, 231 to 233, 273 to 274, and Asn317; these read HMT, SAS, and YY.

The protein belongs to the class-II aminoacyl-tRNA synthetase family. O-phosphoseryl-tRNA(Cys) synthetase subfamily. As to quaternary structure, homotetramer. Interacts with SepCysS.

The catalysed reaction is tRNA(Cys) + O-phospho-L-serine + ATP = O-phospho-L-seryl-tRNA(Cys) + AMP + diphosphate. Functionally, catalyzes the attachment of O-phosphoserine (Sep) to tRNA(Cys). The polypeptide is O-phosphoserine--tRNA(Cys) ligase (Methanococcus maripaludis (strain C5 / ATCC BAA-1333)).